A 315-amino-acid polypeptide reads, in one-letter code: Glycine--tRNA ligase alpha subunit (315 aa).

The protein belongs to the class-II aminoacyl-tRNA synthetase family. Tetramer of two alpha and two beta subunits.

The protein localises to the cytoplasm. The enzyme catalyses tRNA(Gly) + glycine + ATP = glycyl-tRNA(Gly) + AMP + diphosphate. The sequence is that of Glycine--tRNA ligase alpha subunit from Pseudomonas paraeruginosa (strain DSM 24068 / PA7) (Pseudomonas aeruginosa (strain PA7)).